A 277-amino-acid polypeptide reads, in one-letter code: Large ribosomal subunit protein uL2c (277 aa).

A disordered region spans residues 226 to 249 (NPIDHPHGGGEGRAPIGREKPLTP). Positions 229–246 (DHPHGGGEGRAPIGREKP) are enriched in basic and acidic residues.

It belongs to the universal ribosomal protein uL2 family. In terms of assembly, part of the 50S ribosomal subunit.

The protein resides in the plastid. Its subcellular location is the chloroplast. The polypeptide is Large ribosomal subunit protein uL2c (rpl2) (Physcomitrium patens (Spreading-leaved earth moss)).